A 297-amino-acid chain; its full sequence is Acetylglutamate kinase (297 aa).

Substrate-binding positions include G68–G69, R90, and N195.

It belongs to the acetylglutamate kinase family. ArgB subfamily.

It is found in the cytoplasm. It catalyses the reaction N-acetyl-L-glutamate + ATP = N-acetyl-L-glutamyl 5-phosphate + ADP. Its pathway is amino-acid biosynthesis; L-arginine biosynthesis; N(2)-acetyl-L-ornithine from L-glutamate: step 2/4. Catalyzes the ATP-dependent phosphorylation of N-acetyl-L-glutamate. The polypeptide is Acetylglutamate kinase (Chelativorans sp. (strain BNC1)).